A 1081-amino-acid chain; its full sequence is Cellulose synthase A catalytic subunit 1 [UDP-forming] (1081 aa).

M1 bears the N-acetylmethionine mark. Residues 1 to 270 are Cytoplasmic-facing; the sequence is MEASAGLVAG…SRVVPIPSSR (270 aa). Residues C39, C42, C58, C61, C66, C69, C81, and C84 each contribute to the Zn(2+) site. Residues 39 to 85 form an RING-type; degenerate zinc finger; that stretch reads CQICGDDVGLAETGDVFVACNECAFPVCRPCYEYERKDGTQCCPQCK. Residues 118–195 are disordered; that stretch reads GANKARHQRH…RQPVPVRIVD (78 aa). The span at 127-139 shows a compositional bias: basic and acidic residues; that stretch reads HGEEFSSSSRHES. Residues 158 to 168 show a composition bias toward polar residues; sequence PDTQSVRTTSG. Residues 271–291 traverse the membrane as a helical segment; sequence LTPYRVVIILRLIILCFFLQY. The Extracellular portion of the chain corresponds to 292 to 299; sequence RTTHPVKN. Residues 300-320 traverse the membrane as a helical segment; that stretch reads AYPLWLTSVICEIWFAFSWLL. Topologically, residues 321 to 856 are cytoplasmic; it reads DQFPKWYPIN…LLERIAYINT (536 aa). Positions 359, 365, 366, and 395 each coordinate UDP-alpha-D-glucose. Residue D395 is part of the active site. A coiled-coil region spans residues 449 to 476; that stretch reads VKERRAMKREYEEFKVRINALVAKAQKI. K536 provides a ligand contact to UDP-alpha-D-glucose. Mn(2+)-binding residues include K537 and D561. The active site involves D780. The chain crosses the membrane as a helical span at residues 857–877; it reads IVYPITSIPLIAYCILPAFCL. Topologically, residues 878–889 are extracellular; sequence ITDRFIIPEISN. A helical membrane pass occupies residues 890 to 910; sequence YASIWFILLFISIAVTGILEL. The Cytoplasmic portion of the chain corresponds to 911-925; sequence RWSGVSIEDWWRNEQ. A helical transmembrane segment spans residues 926–946; it reads FWVIGGTSAHLFAVFQGLLKV. Over 947 to 976 the chain is Extracellular; that stretch reads LAGIDTNFTVTSKATDEDGDFAELYIFKWT. N953 carries an N-linked (GlcNAc...) asparagine glycan. The helical transmembrane segment at 977-997 threads the bilayer; the sequence is ALLIPPTTVLLVNLIGIVAGV. Topologically, residues 998 to 1008 are cytoplasmic; the sequence is SYAVNSGYQSW. The chain crosses the membrane as a helical span at residues 1009 to 1029; that stretch reads GPLFGKLFFALWVIAHLYPFL. The Extracellular segment spans residues 1030-1038; the sequence is KGLLGRQNR. The chain crosses the membrane as a helical span at residues 1039–1059; it reads TPTIVIVWSVLLASIFSLLWV. The Cytoplasmic portion of the chain corresponds to 1060-1081; it reads RINPFVDANPNANNFNGKGGVF.

This sequence belongs to the glycosyltransferase 2 family. Plant cellulose synthase subfamily. In terms of assembly, interacts with CESA3 and CESA6. Assembly with CESA3 and CESA6 is required for functional complex in primary cell wall cellulose synthesis. Interacts with STL1 and STL2, but not with GOT1. Binds to CSI1. Interacts with PAT24/TIP1. It depends on Zn(2+) as a cofactor. The cofactor is Mn(2+). S-acylated. In terms of tissue distribution, expressed in germinating seeds, seedlings, roots, stems, shoots leaves and flowers, but not in mature flowers.

It is found in the cell membrane. It carries out the reaction [(1-&gt;4)-beta-D-glucosyl](n) + UDP-alpha-D-glucose = [(1-&gt;4)-beta-D-glucosyl](n+1) + UDP + H(+). Its pathway is glycan metabolism; plant cellulose biosynthesis. In terms of biological role, catalytic subunit of cellulose synthase terminal complexes ('rosettes'), required for beta-1,4-glucan microfibril crystallization, a major mechanism of the cell wall formation. Involved in the primary cell wall formation. Required during embryogenesis for cell elongation, orientation of cell expansion and complex cell wall formations, such as interdigitated pattern of epidermal pavement cells, stomatal guard cells and trichomes. Plays a role in lateral roots formation, but seems not necessary for the development of tip-growing cells such as root hairs. The presence of each protein CESA1 and CESA6 is critical for cell expansion after germination. In Arabidopsis thaliana (Mouse-ear cress), this protein is Cellulose synthase A catalytic subunit 1 [UDP-forming].